Reading from the N-terminus, the 63-residue chain is Small ribosomal subunit protein eS30B (63 aa).

A disordered region spans residues M1–Y35. A Phosphoserine modification is found at S16. Residue T48 is modified to Phosphothreonine.

Belongs to the eukaryotic ribosomal protein eS30 family. In terms of assembly, component of the small ribosomal subunit (SSU). Mature yeast ribosomes consist of a small (40S) and a large (60S) subunit. The 40S small subunit contains 1 molecule of ribosomal RNA (18S rRNA) and 33 different proteins (encoded by 57 genes). The large 60S subunit contains 3 rRNA molecules (25S, 5.8S and 5S rRNA) and 46 different proteins (encoded by 81 genes).

It is found in the cytoplasm. Component of the ribosome, a large ribonucleoprotein complex responsible for the synthesis of proteins in the cell. The small ribosomal subunit (SSU) binds messenger RNAs (mRNAs) and translates the encoded message by selecting cognate aminoacyl-transfer RNA (tRNA) molecules. The large subunit (LSU) contains the ribosomal catalytic site termed the peptidyl transferase center (PTC), which catalyzes the formation of peptide bonds, thereby polymerizing the amino acids delivered by tRNAs into a polypeptide chain. The nascent polypeptides leave the ribosome through a tunnel in the LSU and interact with protein factors that function in enzymatic processing, targeting, and the membrane insertion of nascent chains at the exit of the ribosomal tunnel. This chain is Small ribosomal subunit protein eS30B, found in Saccharomyces cerevisiae (strain ATCC 204508 / S288c) (Baker's yeast).